The chain runs to 715 residues: Integrator complex subunit 13 (715 aa).

Disordered regions lie at residues 572-612 (KPPE…SERI) and 626-659 (AEVI…SKGP). The Nuclear localization signal (NLS) signature appears at 581–591 (KRGRKREDKEE). A cleavage module binding motif (CMBM) region spans residues 658–703 (GPMSLLSLWSSRINTANSRKHQEFVGRLNSVNNKAELYQHLKEENG).

Belongs to the Integrator subunit 13 family. In terms of assembly, component of the Integrator complex, composed of core subunits INTS1, INTS2, INTS3, INTS4, INTS5, INTS6, INTS7, INTS8, INTS9/RC74, INTS10, INTS11/CPSF3L, INTS12, INTS13, INTS14 and INTS15. The core complex associates with protein phosphatase 2A subunits PPP2CA and PPP2R1A, to form the Integrator-PP2A (INTAC) complex. INTS13 is part of the tail subcomplex, composed of INTS10, INTS13, INTS14 and INTS15.

It localises to the nucleus. It is found in the cytoplasm. In terms of biological role, component of the integrator complex, a multiprotein complex that terminates RNA polymerase II (Pol II) transcription in the promoter-proximal region of genes. The integrator complex provides a quality checkpoint during transcription elongation by driving premature transcription termination of transcripts that are unfavorably configured for transcriptional elongation: the complex terminates transcription by (1) catalyzing dephosphorylation of the C-terminal domain (CTD) of Pol II subunit POLR2A/RPB1 and SUPT5H/SPT5, (2) degrading the exiting nascent RNA transcript via endonuclease activity and (3) promoting the release of Pol II from bound DNA. The integrator complex is also involved in terminating the synthesis of non-coding Pol II transcripts, such as enhancer RNAs (eRNAs), small nuclear RNAs (snRNAs), telomerase RNAs and long non-coding RNAs (lncRNAs). Within the integrator complex, INTS13 is part of the integrator tail module and acts as a platform for the recruitment of transcription factors at promoters. Plays a role in gastrulation and early embryogenesis. This chain is Integrator complex subunit 13, found in Xenopus laevis (African clawed frog).